A 650-amino-acid chain; its full sequence is MTTRQHTVCVIGAGPRGLSVIERLCAAARAAAPDTAIGIHVVDPHAPGAGQVWRTSQSAHLLMNTVAGQISVFTDASVELTGPLEPGPSLHAWAEALLAGDIPGHYPDQVLDEARALGPDTYPTRAFYGHYLRWAFDRTVAGAPDCVTVTWHRSRAVALDDEAVALATGHPPRQRVTLEDGEVLEHLDAVVLSQGHLPARPTAVEEQFAALAREHGHTHLPPANPADTELECVQPGQPVLLRGLGLNFFDYMALLTTGRGGSFTRVYGRLVYLPSGREPRMYAGSRRGVPYQARGENEKGPHGRHEPLLLTPARIARLQAARGTDGADFQRDVWPLVAKEVETVYYRTLLTARGRGDRAESFQRAFLRALPGTSAEETVLDAYEIGEKDRWDWDRLSRPYQDQEFGSPEDFTAWLLDHLREDVAEARSGNVSGPLKAALDVLRDLRNEIRLVVDHGGLHGDSHREHLDRWYTPLNAFLSIGPPASRIEEAAALIEAGVLHIIGPDLRVDVDRQGFHAHSPLVPGSRISAEVLIEARLPDITLSRTEDPLLRRLLDSGQCATHRIATRNGTWIYTEGVAVTPRPFQLLDAARRPHPRRYAFGVPTESVHWVTAAGIRPGVNSVTLTDSDAIAQAALGAVLEQRDSLERTAA.

It belongs to the nitrosuccinic acid synthase family. FAD serves as cofactor.

It carries out the reaction L-aspartate + 3 NADPH + 3 O2 + 2 H(+) = 2-nitrobutanedioate + 3 NADP(+) + 4 H2O. Its function is as follows. Involved in the biosynthesis of desferrioxamine derivatives which have iron-binding properties and may act as siderophores. Catalyzes the iterative oxidation of L-aspartic acid to nitrosuccinic acid (2-nitrobutanedioate) via N-hydroxyaspartic acid and nitrososuccinic acid. The polypeptide is L-aspartate N-monooxygenase (nitrosuccinate-forming) (Streptomyces davaonensis (strain DSM 101723 / JCM 4913 / KCC S-0913 / 768)).